The following is a 142-amino-acid chain: Transcriptional regulator MraZ (142 aa).

SpoVT-AbrB domains follow at residues 5-51 (ASAL…PRPE) and 77-120 (AMDV…DAQT).

Belongs to the MraZ family. In terms of assembly, forms oligomers.

It is found in the cytoplasm. The protein localises to the nucleoid. This chain is Transcriptional regulator MraZ, found in Paraburkholderia phytofirmans (strain DSM 17436 / LMG 22146 / PsJN) (Burkholderia phytofirmans).